The sequence spans 404 residues: MMVFAFWKVFLILNCLAGQVNMVQVTIPDTFVNVTVGSNVTLLCLYTTTVTSLEKLSIQWSFFHNKEMEPISIYYSEGGQASAIGQFKDRIIGATNPGNASITILHMQPADSGIYICDVNNPPDFFGKNQGILDVTVLVKPSKPFCSIQGRPEAGHPISLSCLSAFGTPSPVYYWYKIEGNTIVPVKESFNSATGVLDIGNLTNFEKGYYQCTAINSLGNSSCEIDLTSSDPEVGIIIGALVGALTGAAIIICVVYFARNKVKSKQKNLNSSTELEPMTKVHHSRQNEAIPAGGIQLEGTLPSSIHASHNTEPTTAVLEPEYEPNPPLETATQPDPEPEGSGPMPVPETEIQLQPEMELEPETEPEPEPEPEPQPELESELEPDPQSGVIVEPMREEEKETVKA.

The N-terminal stretch at M1 to M22 is a signal peptide. Residues V23–L133 enclose the Ig-like V-type domain. The Extracellular portion of the chain corresponds to V23–E233. N-linked (GlcNAc...) asparagine glycosylation is present at N39. Intrachain disulfides connect C44–C117 and C162–C212. The 88-residue stretch at P141 to T228 folds into the Ig-like C2-type domain. 2 N-linked (GlcNAc...) asparagine glycosylation sites follow: N201 and N220. A helical transmembrane segment spans residues V234–V254. Over V255 to A404 the chain is Cytoplasmic. 2 disordered regions span residues Q266–R285 and E298–A404. Phosphoserine is present on residues S271 and S272. Residues L301 to T314 show a composition bias toward polar residues. The segment covering M357–P383 has biased composition (acidic residues). Over residues P393–A404 the composition is skewed to basic and acidic residues.

It localises to the membrane. The polypeptide is V-set and immunoglobulin domain-containing protein 1 (Vsig1) (Rattus norvegicus (Rat)).